Consider the following 555-residue polypeptide: Potassium-transporting ATPase potassium-binding subunit (555 aa).

A run of 10 helical transmembrane segments spans residues 2-22 (IWVA…PTGI), 60-80 (QYAL…YFIF), 130-150 (IGIT…VMAF), 173-193 (VFLP…VPQT), 246-266 (MSNI…PFTY), 278-298 (ILFV…TTSE), 374-394 (AGFV…GLMV), 412-432 (LIAV…ALAL), 483-503 (LVMF…AASL), and 525-545 (GIFI…MLVL).

This sequence belongs to the KdpA family. In terms of assembly, the system is composed of three essential subunits: KdpA, KdpB and KdpC.

It is found in the cell membrane. Part of the high-affinity ATP-driven potassium transport (or Kdp) system, which catalyzes the hydrolysis of ATP coupled with the electrogenic transport of potassium into the cytoplasm. This subunit binds the extracellular potassium ions and delivers the ions to the membrane domain of KdpB through an intramembrane tunnel. This is Potassium-transporting ATPase potassium-binding subunit from Bacillus thuringiensis subsp. konkukian (strain 97-27).